We begin with the raw amino-acid sequence, 310 residues long: uncharacterized protein (310 aa).

A run of 5 helical transmembrane segments spans residues 10–30 (AVLS…AYAI), 44–64 (TVNL…ATPA), 78–98 (FSSG…GYSA), 113–133 (LGIA…WILW), and 161–181 (VVVA…PLIA). Over residues 285–297 (PLEDPKSWQHPDE) the composition is skewed to basic and acidic residues. The interval 285–310 (PLEDPKSWQHPDEFPPSAPLNRDKPN) is disordered.

It belongs to the cation diffusion facilitator (CDF) transporter (TC 2.A.4) family.

It localises to the cell membrane. This is an uncharacterized protein from Synechocystis sp. (strain ATCC 27184 / PCC 6803 / Kazusa).